A 372-amino-acid polypeptide reads, in one-letter code: tRNA pseudouridine synthase D (372 aa).

Catalysis depends on Asp-85, which acts as the Nucleophile. In terms of domain architecture, TRUD spans 160 to 330 (GFANYFGYQR…MQGSRRFMWG (171 aa)).

This sequence belongs to the pseudouridine synthase TruD family.

It carries out the reaction uridine(13) in tRNA = pseudouridine(13) in tRNA. Responsible for synthesis of pseudouridine from uracil-13 in transfer RNAs. The protein is tRNA pseudouridine synthase D of Campylobacter jejuni subsp. jejuni serotype O:2 (strain ATCC 700819 / NCTC 11168).